The chain runs to 843 residues: Translation initiation factor IF-2 (843 aa).

The interval 94-259 (QRSPEEIEAE…AHGFQSPTGP (166 aa)) is disordered. A compositionally biased stretch (basic and acidic residues) spans 96–135 (SPEEIEAERKREMDERRAVENAARQKAEEEAKRRAEEDAR). The segment covering 136–177 (NQPAAGQPASAPAQPVAAAEPVREAPAPAAAAPAPASAAPSA) has biased composition (low complexity). 2 stretches are compositionally biased toward basic and acidic residues: residues 178–219 (DARK…EKAP) and 227–236 (TTDEESDSFR). Basic residues predominate over residues 237–250 (RGGRGKSRLKKRNA). The region spanning 343-512 (SRAPVVTVMG…LLQAEVLELK (170 aa)) is the tr-type G domain. The segment at 352–359 (GHVDHGKT) is G1. Residue 352 to 359 (GHVDHGKT) coordinates GTP. The tract at residues 377-381 (GITQH) is G2. The G3 stretch occupies residues 398–401 (DTPG). GTP-binding positions include 398-402 (DTPGH) and 452-455 (NKID). Residues 452–455 (NKID) are G4. The tract at residues 488-490 (SAK) is G5.

It belongs to the TRAFAC class translation factor GTPase superfamily. Classic translation factor GTPase family. IF-2 subfamily.

Its subcellular location is the cytoplasm. One of the essential components for the initiation of protein synthesis. Protects formylmethionyl-tRNA from spontaneous hydrolysis and promotes its binding to the 30S ribosomal subunits. Also involved in the hydrolysis of GTP during the formation of the 70S ribosomal complex. This chain is Translation initiation factor IF-2, found in Pseudomonas savastanoi pv. phaseolicola (strain 1448A / Race 6) (Pseudomonas syringae pv. phaseolicola (strain 1448A / Race 6)).